The sequence spans 99 residues: Duplicate procyclin (99 aa).

This Trypanosoma brucei brucei protein is Duplicate procyclin.